The primary structure comprises 92 residues: Small ribosomal subunit protein uS17 (92 aa).

It belongs to the universal ribosomal protein uS17 family. In terms of assembly, part of the 30S ribosomal subunit.

One of the primary rRNA binding proteins, it binds specifically to the 5'-end of 16S ribosomal RNA. The protein is Small ribosomal subunit protein uS17 of Corynebacterium diphtheriae (strain ATCC 700971 / NCTC 13129 / Biotype gravis).